A 776-amino-acid chain; its full sequence is Protein FAM83C (776 aa).

The tract at residues 1-340 is DUF1669; that stretch reads MQGCQAGASI…LYAESQPVEG (340 aa). Disordered stretches follow at residues 344–467, 494–565, 617–653, 669–694, and 716–745; these read NEDP…STSP, SRLP…SLQH, HGQL…DDRR, PFRS…VGSA, and QGAR…LFAP. Residues 368 to 385 show a composition bias toward low complexity; that stretch reads SATGSSPSSNSLSSIKHS. Residues 452–467 show a composition bias toward polar residues; that stretch reads PWSQSSPALNHSSTSP. Residues 523-539 show a composition bias toward basic and acidic residues; that stretch reads VEEKKVSLSQSHDHLDR. The segment covering 554-563 has biased composition (polar residues); sequence SRVTPDSSSL.

The protein belongs to the FAM83 family. Directly interacts (via DUF1669) with CSNK1A1 and CSNK1A1L. May interact with RAF1. Phosphorylated by CSNK1A1.

Its subcellular location is the cytoplasm. Functionally, may play a role in MAPK signaling. The protein is Protein FAM83C of Mus musculus (Mouse).